We begin with the raw amino-acid sequence, 482 residues long: Membrane-bound lytic murein transglycosylase F (482 aa).

An N-terminal signal peptide occupies residues 1 to 18 (MKGLFLRIITALALLFWA). Residues 19–267 (IDMVFPWQFL…NLKEKYLGHI (249 aa)) are non-LT domain. The interval 268-482 (SQFDYVDTRS…NLEEIKENED (215 aa)) is LT domain. Residue Glu-312 is part of the active site. The segment covering 457–470 (ENQTTNDNANNESA) has biased composition (polar residues). The segment at 457–482 (ENQTTNDNANNESAVKNLEEIKENED) is disordered. The span at 473–482 (NLEEIKENED) shows a compositional bias: basic and acidic residues.

It in the N-terminal section; belongs to the bacterial solute-binding protein 3 family. This sequence in the C-terminal section; belongs to the transglycosylase Slt family.

Its subcellular location is the cell outer membrane. It catalyses the reaction Exolytic cleavage of the (1-&gt;4)-beta-glycosidic linkage between N-acetylmuramic acid (MurNAc) and N-acetylglucosamine (GlcNAc) residues in peptidoglycan, from either the reducing or the non-reducing ends of the peptidoglycan chains, with concomitant formation of a 1,6-anhydrobond in the MurNAc residue.. Murein-degrading enzyme that degrades murein glycan strands and insoluble, high-molecular weight murein sacculi, with the concomitant formation of a 1,6-anhydromuramoyl product. Lytic transglycosylases (LTs) play an integral role in the metabolism of the peptidoglycan (PG) sacculus. Their lytic action creates space within the PG sacculus to allow for its expansion as well as for the insertion of various structures such as secretion systems and flagella. In Haemophilus influenzae (strain PittGG), this protein is Membrane-bound lytic murein transglycosylase F.